The sequence spans 364 residues: MISRRSTRQIQVGRVAVGGDSPVSVQSMTNTDTRDIEKTAEQLQRLQQAGCDIARVAVLDQDAARAISALVDMSSMPIIADIHFDYRLAIAAMENGAAAIRINPGNLGGEEKTAKVVAAAKMHGLPIRVGVNSGSIEKDLLKKYGYPTADNTQALIESALRNVRLLEKHGFEQIKISIKSSDVLTTVNGYQQLSKVTDYPLHLGVTEAGGLIAGTVKSSVALGILLNQGIGDTLRISLTRDPVEEVRVAFELLRCLGIRQRGPELISCPTCGRTRIDLFSLAEKVEQVVQAMEAPIKVAVMGCVVNGPGEAKEADIGIAGGEGLGIIFKKGVLYKKVAEEQLLEVFLAELRELEEEYQKKHNNV.

[4Fe-4S] cluster is bound by residues Cys-268, Cys-271, Cys-303, and Glu-310.

The protein belongs to the IspG family. Requires [4Fe-4S] cluster as cofactor.

It catalyses the reaction (2E)-4-hydroxy-3-methylbut-2-enyl diphosphate + oxidized [flavodoxin] + H2O + 2 H(+) = 2-C-methyl-D-erythritol 2,4-cyclic diphosphate + reduced [flavodoxin]. Its pathway is isoprenoid biosynthesis; isopentenyl diphosphate biosynthesis via DXP pathway; isopentenyl diphosphate from 1-deoxy-D-xylulose 5-phosphate: step 5/6. Functionally, converts 2C-methyl-D-erythritol 2,4-cyclodiphosphate (ME-2,4cPP) into 1-hydroxy-2-methyl-2-(E)-butenyl 4-diphosphate. This Desulfotalea psychrophila (strain LSv54 / DSM 12343) protein is 4-hydroxy-3-methylbut-2-en-1-yl diphosphate synthase (flavodoxin).